The primary structure comprises 359 residues: Aromatic amino acid aminotransferase (359 aa).

The segment at 1 to 42 is disordered; it reads MSERKPPYLRSALDSIPPYRPGRKVVGPDGRSAKLSSNESPF. Residue K223 is modified to N6-(pyridoxal phosphate)lysine.

This sequence belongs to the class-II pyridoxal-phosphate-dependent aminotransferase family. As to quaternary structure, homodimer. Pyridoxal 5'-phosphate is required as a cofactor.

The catalysed reaction is an aromatic L-alpha-amino acid + 2-oxoglutarate = an aromatic oxo-acid + L-glutamate. Aminotransferase that catalyzes the conversion of aromatic amino acids and 2-oxoglutarate into corresponding aromatic oxo acids and L-glutamate. This is Aromatic amino acid aminotransferase from Thermobifida fusca (strain YX).